Here is a 171-residue protein sequence, read N- to C-terminus: MTRLHAFNREQLLASARGELFGTAAGRLPNDPMLMFDRITDIREDGGPHGKGMVRAELDIRPDLWFFGCHFIGDPVMPGCLGLDAMWQLTGFFLTWLGAPGKGRALGCGEVKFTGQVLPEAKLVRYEIDISRVINRKLVMAQSDARMYVDDREIYSARDLRVGLFTETGSF.

The active site involves His-70.

The protein belongs to the thioester dehydratase family. FabA subfamily. In terms of assembly, homodimer.

Its subcellular location is the cytoplasm. The catalysed reaction is a (3R)-hydroxyacyl-[ACP] = a (2E)-enoyl-[ACP] + H2O. The enzyme catalyses (3R)-hydroxydecanoyl-[ACP] = (2E)-decenoyl-[ACP] + H2O. It catalyses the reaction (2E)-decenoyl-[ACP] = (3Z)-decenoyl-[ACP]. It participates in lipid metabolism; fatty acid biosynthesis. Functionally, necessary for the introduction of cis unsaturation into fatty acids. Catalyzes the dehydration of (3R)-3-hydroxydecanoyl-ACP to E-(2)-decenoyl-ACP and then its isomerization to Z-(3)-decenoyl-ACP. Can catalyze the dehydratase reaction for beta-hydroxyacyl-ACPs with saturated chain lengths up to 16:0, being most active on intermediate chain length. The protein is 3-hydroxydecanoyl-[acyl-carrier-protein] dehydratase of Stenotrophomonas maltophilia (strain K279a).